Reading from the N-terminus, the 362-residue chain is Golgi-resident adenosine 3',5'-bisphosphate 3'-phosphatase (362 aa).

Met-1 bears the N-acetylmethionine mark. At 1–12 the chain is on the cytoplasmic side; sequence MAPMGIRLSPLG. Residues 13 to 33 form a helical membrane-spanning segment; it reads VAVFCLLGLGVLYHLYSGFLA. Topologically, residues 34-362 are lumenal; sequence GRFSLFGLGG…LPDLEKTGHK (329 aa). The disordered stretch occupies residues 88 to 109; sequence RESNVLHEKSKGKTREGADDKM. Asp-113 (proton acceptor) is an active-site residue. 4 residues coordinate Mg(2+): Glu-136, Asp-177, Leu-179, and Asp-180. Residue Thr-182 is the Proton acceptor of the active site. Ser-245 and His-248 together coordinate AMP. The N-linked (GlcNAc...) asparagine glycan is linked to Asn-262. 2 residues coordinate AMP: Gly-271 and Lys-275. Asp-303 is a binding site for Mg(2+).

This sequence belongs to the inositol monophosphatase superfamily. The cofactor is Mg(2+). In terms of processing, contains N-linked glycan resistant to endoglycosydase H.

It localises to the golgi apparatus. The protein localises to the trans-Golgi network membrane. It catalyses the reaction adenosine 3',5'-bisphosphate + H2O = AMP + phosphate. The protein operates within sulfur metabolism. Its activity is regulated as follows. Strongly inhibited by lithium. Functionally, exhibits 3'-nucleotidase activity toward adenosine 3',5'-bisphosphate (PAP), namely hydrolyzes adenosine 3',5'-bisphosphate into adenosine 5'-monophosphate (AMP) and a phosphate. May play a role in the formation of skeletal elements derived through endochondral ossification, possibly by clearing adenosine 3',5'-bisphosphate produced by Golgi sulfotransferases during glycosaminoglycan sulfation. Has no activity toward 3'-phosphoadenosine 5'-phosphosulfate (PAPS) or inositol phosphate (IP) substrates including I(1)P, I(1,4)P2, I(1,3,4)P3, I(1,4,5)P3 and I(1,3,4,5)P4. This Bos taurus (Bovine) protein is Golgi-resident adenosine 3',5'-bisphosphate 3'-phosphatase (BPNT2).